A 106-amino-acid chain; its full sequence is Pyrimidine/purine nucleoside phosphorylase (106 aa).

Belongs to the nucleoside phosphorylase PpnP family.

The enzyme catalyses a purine D-ribonucleoside + phosphate = a purine nucleobase + alpha-D-ribose 1-phosphate. It carries out the reaction adenosine + phosphate = alpha-D-ribose 1-phosphate + adenine. The catalysed reaction is cytidine + phosphate = cytosine + alpha-D-ribose 1-phosphate. It catalyses the reaction guanosine + phosphate = alpha-D-ribose 1-phosphate + guanine. The enzyme catalyses inosine + phosphate = alpha-D-ribose 1-phosphate + hypoxanthine. It carries out the reaction thymidine + phosphate = 2-deoxy-alpha-D-ribose 1-phosphate + thymine. The catalysed reaction is uridine + phosphate = alpha-D-ribose 1-phosphate + uracil. It catalyses the reaction xanthosine + phosphate = alpha-D-ribose 1-phosphate + xanthine. Its function is as follows. Catalyzes the phosphorolysis of diverse nucleosides, yielding D-ribose 1-phosphate and the respective free bases. Can use uridine, adenosine, guanosine, cytidine, thymidine, inosine and xanthosine as substrates. Also catalyzes the reverse reactions. The polypeptide is Pyrimidine/purine nucleoside phosphorylase (Burkholderia ambifaria (strain ATCC BAA-244 / DSM 16087 / CCUG 44356 / LMG 19182 / AMMD) (Burkholderia cepacia (strain AMMD))).